We begin with the raw amino-acid sequence, 289 residues long: 2,3-dimethylmalate lyase (289 aa).

This sequence belongs to the isocitrate lyase/PEP mutase superfamily. Homotetramer. Mg(2+) is required as a cofactor.

It catalyses the reaction (2R,3S)-2,3-dimethylmalate = propanoate + pyruvate. Its pathway is cofactor degradation; nicotinate degradation; propanoate and pyruvate from 6-hydroxynicotinate: step 8/8. With respect to regulation, completely inhibited by propionic anhydride and by cystamine. Irreversibly inhibited by the mercapto reagents iodoacetate and iodoacetamide. Unaffected by hydroxylamine. Functionally, catalyzes the formation of proponate and pyruvate from (2R,3S)-2,3-dimethylmalate. Has no activity toward dimethylmaleate, malate, citramalate, isocitrate and citrate. This chain is 2,3-dimethylmalate lyase, found in Eubacterium barkeri (Clostridium barkeri).